An 82-amino-acid chain; its full sequence is NADH-ubiquinone oxidoreductase 9.5 kDa subunit (82 aa).

Residues 25–43 (AYFYSCVIAGLGPVFLTVV) form a helical membrane-spanning segment.

Belongs to the complex I NDUFA3 subunit family. Complex I is composed of about 40 different subunits.

Its subcellular location is the mitochondrion inner membrane. Its function is as follows. Accessory subunit of the mitochondrial membrane respiratory chain NADH dehydrogenase (Complex I), that is believed not to be involved in catalysis. Complex I functions in the transfer of electrons from NADH to the respiratory chain. The immediate electron acceptor for the enzyme is believed to be ubiquinone. This subunit binds ubiquinone. This chain is NADH-ubiquinone oxidoreductase 9.5 kDa subunit (nuo9.5), found in Neurospora crassa (strain ATCC 24698 / 74-OR23-1A / CBS 708.71 / DSM 1257 / FGSC 987).